Reading from the N-terminus, the 146-residue chain is UPF0735 ACT domain-containing protein Cbei_1295 (146 aa).

The 76-residue stretch at 70–145 folds into the ACT domain; that stretch reads TYNIIFKNEK…NVEKVEFIGM (76 aa).

It belongs to the UPF0735 family.

In Clostridium beijerinckii (strain ATCC 51743 / NCIMB 8052) (Clostridium acetobutylicum), this protein is UPF0735 ACT domain-containing protein Cbei_1295.